The sequence spans 357 residues: N-acetyl-gamma-glutamyl-phosphate reductase (357 aa).

Cysteine 160 is an active-site residue.

It belongs to the NAGSA dehydrogenase family. Type 1 subfamily.

It is found in the cytoplasm. The enzyme catalyses N-acetyl-L-glutamate 5-semialdehyde + phosphate + NADP(+) = N-acetyl-L-glutamyl 5-phosphate + NADPH + H(+). It participates in amino-acid biosynthesis; L-arginine biosynthesis; N(2)-acetyl-L-ornithine from L-glutamate: step 3/4. In terms of biological role, catalyzes the NADPH-dependent reduction of N-acetyl-5-glutamyl phosphate to yield N-acetyl-L-glutamate 5-semialdehyde. The chain is N-acetyl-gamma-glutamyl-phosphate reductase from Prochlorococcus marinus (strain MIT 9313).